The primary structure comprises 482 residues: Dual specificity protein phosphatase 10 (482 aa).

Residues 168 to 285 form the Rhodanese domain; that stretch reads PSQGPVIIDC…FKQNHENLCD (118 aa). An interaction with MAP kinases region spans residues 199–215; sequence KISRRRLQQGKITVLDL. The Tyrosine-protein phosphatase domain maps to 321–464; it reads ELTPILPFLF…LLEFEEDLNN (144 aa). Cys-408 functions as the Phosphocysteine intermediate in the catalytic mechanism.

Belongs to the protein-tyrosine phosphatase family. Non-receptor class dual specificity subfamily. In terms of assembly, monomer. Interacts with MAPK14.

The protein resides in the cytoplasm. The protein localises to the nucleus. The enzyme catalyses O-phospho-L-tyrosyl-[protein] + H2O = L-tyrosyl-[protein] + phosphate. The catalysed reaction is O-phospho-L-seryl-[protein] + H2O = L-seryl-[protein] + phosphate. It carries out the reaction O-phospho-L-threonyl-[protein] + H2O = L-threonyl-[protein] + phosphate. Protein phosphatase involved in the inactivation of MAP kinases. Has a specificity for the MAPK11/MAPK12/MAPK13/MAPK14 subfamily. It preferably dephosphorylates p38. This is Dual specificity protein phosphatase 10 (DUSP10) from Bos taurus (Bovine).